Reading from the N-terminus, the 426-residue chain is 26S proteasome regulatory subunit 7 (426 aa).

209 to 216 (GPPGTGKT) is a binding site for ATP.

The protein belongs to the AAA ATPase family.

It is found in the cytoplasm. The protein resides in the nucleus. Functionally, the 26S proteasome is involved in the ATP-dependent degradation of ubiquitinated proteins. The regulatory (or ATPase) complex confers ATP dependency and substrate specificity to the 26S complex. The polypeptide is 26S proteasome regulatory subunit 7 (RPT1) (Spinacia oleracea (Spinach)).